A 181-amino-acid polypeptide reads, in one-letter code: Disulfide bond formation protein B (181 aa).

Residues methionine 1 to alanine 13 are Cytoplasmic-facing. A helical transmembrane segment spans residues tryptophan 14–tyrosine 30. Over phenylalanine 31–methionine 48 the chain is Periplasmic. Cysteine 40 and cysteine 43 form a disulfide bridge. The helical transmembrane segment at alanine 49–serine 64 threads the bilayer. The Cytoplasmic portion of the chain corresponds to glycine 65–tryptophan 71. A helical transmembrane segment spans residues alanine 72 to tyrosine 89. Residues aspartate 90–glycine 145 lie on the Periplasmic side of the membrane. Cysteines 105 and 131 form a disulfide. A helical transmembrane segment spans residues tryptophan 146–cysteine 164. At histidine 165–lysine 181 the chain is on the cytoplasmic side.

The protein belongs to the DsbB family.

Its subcellular location is the cell inner membrane. In terms of biological role, required for disulfide bond formation in some periplasmic proteins. Acts by oxidizing the DsbA protein. This is Disulfide bond formation protein B from Idiomarina loihiensis (strain ATCC BAA-735 / DSM 15497 / L2-TR).